A 569-amino-acid polypeptide reads, in one-letter code: Urease subunit alpha (569 aa).

A Urease domain is found at 132–569; sequence GGVDTHIHFI…VPLGQRYFLF (438 aa). His137, His139, and Lys220 together coordinate Ni(2+). Lys220 is subject to N6-carboxylysine. His222 is a substrate binding site. Ni(2+) is bound by residues His249 and His275. His323 serves as the catalytic Proton donor. Asp363 is a Ni(2+) binding site.

Belongs to the metallo-dependent hydrolases superfamily. Urease alpha subunit family. In terms of assembly, heterotrimer of UreA (gamma), UreB (beta) and UreC (alpha) subunits. Three heterotrimers associate to form the active enzyme. The cofactor is Ni cation. Carboxylation allows a single lysine to coordinate two nickel ions.

It is found in the cytoplasm. It carries out the reaction urea + 2 H2O + H(+) = hydrogencarbonate + 2 NH4(+). The protein operates within nitrogen metabolism; urea degradation; CO(2) and NH(3) from urea (urease route): step 1/1. The sequence is that of Urease subunit alpha from Bacillus subtilis (strain 168).